The chain runs to 80 residues: Exodeoxyribonuclease 7 small subunit (80 aa).

The protein belongs to the XseB family. In terms of assembly, heterooligomer composed of large and small subunits.

The protein resides in the cytoplasm. The enzyme catalyses Exonucleolytic cleavage in either 5'- to 3'- or 3'- to 5'-direction to yield nucleoside 5'-phosphates.. Bidirectionally degrades single-stranded DNA into large acid-insoluble oligonucleotides, which are then degraded further into small acid-soluble oligonucleotides. This chain is Exodeoxyribonuclease 7 small subunit, found in Rickettsia bellii (strain OSU 85-389).